Consider the following 220-residue polypeptide: Small ribosomal subunit protein uS2 (220 aa).

The protein belongs to the universal ribosomal protein uS2 family.

This Methanococcus maripaludis (strain C5 / ATCC BAA-1333) protein is Small ribosomal subunit protein uS2.